Consider the following 88-residue polypeptide: Carboxysome shell vertex protein CsoS4A (88 aa).

In terms of domain architecture, BMV spans 1-76 (MLICKVLKPL…SDLTIVGIID (76 aa)).

Belongs to the CcmL/EutN family. CsoS4 subfamily. Homopentamer.

It localises to the carboxysome. Its function is as follows. Probably forms vertices in the carboxysome, a polyhedral inclusion where RuBisCO (ribulose bisphosphate carboxylase, cbbL-cbbS) is sequestered. Has been modeled to induce curvature upon insertion into an otherwise flat hexagonal layer of major carboxysome subunits. Has not been identified in purified carboxysomes; it is expected to be present in very low amounts. The chain is Carboxysome shell vertex protein CsoS4A from Prochlorococcus marinus subsp. pastoris (strain CCMP1986 / NIES-2087 / MED4).